The following is a 124-amino-acid chain: Small ribosomal subunit protein uS12 (124 aa).

A disordered region spans residues 1–32 (MPTIQQLVRKGRQAKTTKTKTPALKGSPQRRG). The segment covering 9–18 (RKGRQAKTTK) has biased composition (basic residues). Position 89 is a 3-methylthioaspartic acid (Asp-89). The tract at residues 105-124 (QGVRNRKQARSRYGAKKEKS) is disordered. Positions 108–118 (RNRKQARSRYG) are enriched in basic residues.

It belongs to the universal ribosomal protein uS12 family. As to quaternary structure, part of the 30S ribosomal subunit. Contacts proteins S8 and S17. May interact with IF1 in the 30S initiation complex.

In terms of biological role, with S4 and S5 plays an important role in translational accuracy. Functionally, interacts with and stabilizes bases of the 16S rRNA that are involved in tRNA selection in the A site and with the mRNA backbone. Located at the interface of the 30S and 50S subunits, it traverses the body of the 30S subunit contacting proteins on the other side and probably holding the rRNA structure together. The combined cluster of proteins S8, S12 and S17 appears to hold together the shoulder and platform of the 30S subunit. In Salinispora arenicola (strain CNS-205), this protein is Small ribosomal subunit protein uS12.